A 199-amino-acid chain; its full sequence is Large ribosomal subunit protein uL4 (199 aa).

It belongs to the universal ribosomal protein uL4 family. In terms of assembly, part of the 50S ribosomal subunit.

In terms of biological role, one of the primary rRNA binding proteins, this protein initially binds near the 5'-end of the 23S rRNA. It is important during the early stages of 50S assembly. It makes multiple contacts with different domains of the 23S rRNA in the assembled 50S subunit and ribosome. Functionally, forms part of the polypeptide exit tunnel. This is Large ribosomal subunit protein uL4 from Aquifex aeolicus (strain VF5).